The sequence spans 325 residues: DNA-directed RNA polymerase subunit alpha (325 aa).

Residues 1 to 231 (MQTSLLKPKI…DQLSVFAALE (231 aa)) are alpha N-terminal domain (alpha-NTD). The tract at residues 246-325 (IDPILLRPVD…ENWPPAGLDK (80 aa)) is alpha C-terminal domain (alpha-CTD).

The protein belongs to the RNA polymerase alpha chain family. Homodimer. The RNAP catalytic core consists of 2 alpha, 1 beta, 1 beta' and 1 omega subunit. When a sigma factor is associated with the core the holoenzyme is formed, which can initiate transcription.

The enzyme catalyses RNA(n) + a ribonucleoside 5'-triphosphate = RNA(n+1) + diphosphate. Functionally, DNA-dependent RNA polymerase catalyzes the transcription of DNA into RNA using the four ribonucleoside triphosphates as substrates. The protein is DNA-directed RNA polymerase subunit alpha of Burkholderia mallei (strain NCTC 10247).